The chain runs to 437 residues: Tol-Pal system protein TolB (437 aa).

An N-terminal signal peptide occupies residues 1–30 (MLPTPSRSHKLSGYAAVLFFLWLVCSPAQA). The span at 410-423 (SDGRTRQQLSTQTG) shows a compositional bias: polar residues. The segment at 410–437 (SDGRTRQQLSTQTGDIREPAWGPLRRLQ) is disordered.

It belongs to the TolB family. The Tol-Pal system is composed of five core proteins: the inner membrane proteins TolA, TolQ and TolR, the periplasmic protein TolB and the outer membrane protein Pal. They form a network linking the inner and outer membranes and the peptidoglycan layer.

The protein resides in the periplasm. Part of the Tol-Pal system, which plays a role in outer membrane invagination during cell division and is important for maintaining outer membrane integrity. The chain is Tol-Pal system protein TolB from Nitrosospira multiformis (strain ATCC 25196 / NCIMB 11849 / C 71).